Reading from the N-terminus, the 382-residue chain is Alkaline serine protease ver112 (382 aa).

Residues 1–15 form the signal peptide; it reads MRLSIIAAVLPLALA. A propeptide spanning residues 16-102 is cleaved from the precursor; that stretch reads APVAEPEIAP…IEQDAIFSIN (87 aa). The Inhibitor I9 domain maps to 56–99; the sequence is SKIPGIERVYENVLNGFSATLSNEELERLRRDPDVESIEQDAIF. The Peptidase S8 domain maps to 111-382; that stretch reads TWGLTRISHR…VNYLAFNGAT (272 aa). Intrachain disulfides connect Cys138-Cys227 and Cys282-Cys353. Residues Asp143, His173, and Ser328 each act as charge relay system in the active site.

This sequence belongs to the peptidase S8 family.

Its subcellular location is the secreted. Inhibited by phenylmethylsulfonyl fluoride (PMSF). In terms of biological role, serine protease which can degrade the nematode cuticle. The protein is Alkaline serine protease ver112 of Corniculantispora psalliotae (Lecanicillium psalliotae).